A 176-amino-acid chain; its full sequence is Ribosome maturation factor RimM (176 aa).

One can recognise a PRC barrel domain in the interval 93-172; the sequence is KDEFFQFDII…EILVKGARDI (80 aa).

It belongs to the RimM family. Binds ribosomal protein uS19.

Its subcellular location is the cytoplasm. Functionally, an accessory protein needed during the final step in the assembly of 30S ribosomal subunit, possibly for assembly of the head region. Essential for efficient processing of 16S rRNA. May be needed both before and after RbfA during the maturation of 16S rRNA. It has affinity for free ribosomal 30S subunits but not for 70S ribosomes. The protein is Ribosome maturation factor RimM of Campylobacter concisus (strain 13826).